The chain runs to 643 residues: Threonine--tRNA ligase (643 aa).

The 62-residue stretch at 3–64 folds into the TGS domain; that stretch reads DVVKITFPDG…EEDGAISIIT (62 aa). Residues 245-542 form a catalytic region; the sequence is DHRKLGKELD…LIEEYKGAFP (298 aa). The Zn(2+) site is built by Cys-338, His-389, and His-519.

It belongs to the class-II aminoacyl-tRNA synthetase family. Homodimer. It depends on Zn(2+) as a cofactor.

The protein resides in the cytoplasm. It catalyses the reaction tRNA(Thr) + L-threonine + ATP = L-threonyl-tRNA(Thr) + AMP + diphosphate + H(+). Catalyzes the attachment of threonine to tRNA(Thr) in a two-step reaction: L-threonine is first activated by ATP to form Thr-AMP and then transferred to the acceptor end of tRNA(Thr). Also edits incorrectly charged L-seryl-tRNA(Thr). In Anoxybacillus flavithermus (strain DSM 21510 / WK1), this protein is Threonine--tRNA ligase.